The primary structure comprises 326 residues: tRNA-modifying protein YgfZ (326 aa).

2 residues coordinate folate: Trp27 and Trp189.

Belongs to the tRNA-modifying YgfZ family.

The protein resides in the cytoplasm. Folate-binding protein involved in regulating the level of ATP-DnaA and in the modification of some tRNAs. It is probably a key factor in regulatory networks that act via tRNA modification, such as initiation of chromosomal replication. In Salmonella paratyphi C (strain RKS4594), this protein is tRNA-modifying protein YgfZ.